Reading from the N-terminus, the 343-residue chain is Ribosomal RNA small subunit methyltransferase C (343 aa).

This sequence belongs to the methyltransferase superfamily. RsmC family. In terms of assembly, monomer.

It is found in the cytoplasm. The enzyme catalyses guanosine(1207) in 16S rRNA + S-adenosyl-L-methionine = N(2)-methylguanosine(1207) in 16S rRNA + S-adenosyl-L-homocysteine + H(+). Specifically methylates the guanine in position 1207 of 16S rRNA in the 30S particle. The protein is Ribosomal RNA small subunit methyltransferase C of Escherichia coli O6:H1 (strain CFT073 / ATCC 700928 / UPEC).